We begin with the raw amino-acid sequence, 346 residues long: DNA polymerase IV 2 (346 aa).

A UmuC domain is found at 9–191 (ILHVDLDQFL…RTVEALWGVG (183 aa)). 2 residues coordinate Mg(2+): D13 and D111. E112 is an active-site residue.

Belongs to the DNA polymerase type-Y family. Monomer. The cofactor is Mg(2+).

The protein resides in the cytoplasm. The enzyme catalyses DNA(n) + a 2'-deoxyribonucleoside 5'-triphosphate = DNA(n+1) + diphosphate. In terms of biological role, poorly processive, error-prone DNA polymerase involved in untargeted mutagenesis. Copies undamaged DNA at stalled replication forks, which arise in vivo from mismatched or misaligned primer ends. These misaligned primers can be extended by PolIV. Exhibits no 3'-5' exonuclease (proofreading) activity. May be involved in translesional synthesis, in conjunction with the beta clamp from PolIII. This is DNA polymerase IV 2 (dinB2) from Mycobacterium bovis (strain ATCC BAA-935 / AF2122/97).